The chain runs to 350 residues: WUSCHEL-related homeobox 1 (350 aa).

Residues 72 to 136 (MVSSRWNPTP…NHKARERQKR (65 aa)) constitute a DNA-binding region (homeobox; WUS-type). The interval 283 to 308 (TNTETCHRNGDDNKDQEQHEDCSNGE) is disordered.

The protein belongs to the WUS homeobox family.

Its subcellular location is the nucleus. Its function is as follows. Transcription factor which may be involved in developmental processes. The protein is WUSCHEL-related homeobox 1 (WOX1) of Arabidopsis thaliana (Mouse-ear cress).